The primary structure comprises 81 residues: MKTLLLTLVVVTIVCLDLGYTMTCCNQQSSQPKTITTCAESSCYKKTWKDHHGTRIERGCGCPPRKPLIDLICCETDECNN.

A signal peptide spans 1–21 (MKTLLLTLVVVTIVCLDLGYT). Disulfide bonds link C24-C43, C38-C60, C62-C73, and C74-C79.

Belongs to the three-finger toxin family. Short-chain subfamily. Type I alpha-neurotoxin sub-subfamily. In terms of tissue distribution, expressed by the venom gland.

The protein localises to the secreted. In terms of biological role, binds to muscle nicotinic acetylcholine receptor (nAChR) and inhibit acetylcholine from binding to the receptor, thereby impairing neuromuscular transmission. This is Short neurotoxin 1 from Cryptophis nigrescens (Eastern small-eyed snake).